We begin with the raw amino-acid sequence, 316 residues long: Apolipoprotein E (316 aa).

Residues 1-18 form the signal peptide; sequence MKVLWVALVVALLAGCQA. 8 repeat units span residues 79-100, 101-122, 123-144, 145-166, 167-188, 189-210, 211-232, and 233-254. Residues 79 to 254 form an 8 X 22 AA approximate tandem repeats region; the sequence is VLMEETMKEV…RLDKMRQQLE (176 aa). Met142 carries the methionine sulfoxide modification. Position 146 is a phosphoserine (Ser146). The LDL and other lipoprotein receptors binding stretch occupies residues 157 to 167; it reads HLRKLRKRLLR. Residue 161–164 participates in heparin binding; the sequence is LRKR. Residues 209–289 form a lipid-binding and lipoprotein association region; it reads AATLSTQVGQ…SWFEPLVEDM (81 aa). An O-linked (GalNAc...) threonine glycan is attached at Thr211. 228-235 serves as a coordination point for heparin; sequence RQKLHGRL. Residues 265–316 form a homooligomerization region; sequence SQIRLQAEAFQARLRSWFEPLVEDMQRQWAGLVEKVQLALHLSPTSPPSENH. The interval 277–289 is specificity for association with VLDL; that stretch reads RLRSWFEPLVEDM.

This sequence belongs to the apolipoprotein A1/A4/E family. In terms of assembly, homotetramer. May interact with ABCA1; functionally associated with ABCA1 in the biogenesis of HDLs. May interact with APP/A4 amyloid-beta peptide; the interaction is extremely stable in vitro but its physiological significance is unclear. May interact with MAPT. May interact with MAP2. In the cerebrospinal fluid, interacts with secreted SORL1. Interacts with PMEL; this allows the loading of PMEL luminal fragment on ILVs to induce fibril nucleation. In terms of processing, APOE exists as multiple glycosylated and sialylated glycoforms within cells and in plasma. The extent of glycosylation and sialylation are tissue and context specific. Post-translationally, glycated in plasma VLDL. Phosphorylated by FAM20C in the extracellular medium.

Its subcellular location is the secreted. The protein localises to the extracellular space. The protein resides in the extracellular matrix. It localises to the extracellular vesicle. It is found in the endosome. Its subcellular location is the multivesicular body. Functionally, APOE is an apolipoprotein, a protein associating with lipid particles, that mainly functions in lipoprotein-mediated lipid transport between organs via the plasma and interstitial fluids. APOE is a core component of plasma lipoproteins and is involved in their production, conversion and clearance. Apolipoproteins are amphipathic molecules that interact both with lipids of the lipoprotein particle core and the aqueous environment of the plasma. As such, APOE associates with chylomicrons, chylomicron remnants, very low density lipoproteins (VLDL) and intermediate density lipoproteins (IDL) but shows a preferential binding to high-density lipoproteins (HDL). It also binds a wide range of cellular receptors including the LDL receptor/LDLR and the very low-density lipoprotein receptor/VLDLR that mediate the cellular uptake of the APOE-containing lipoprotein particles. Finally, APOE also has a heparin-binding activity and binds heparan-sulfate proteoglycans on the surface of cells, a property that supports the capture and the receptor-mediated uptake of APOE-containing lipoproteins by cells. In Ovis aries musimon (Mouflon), this protein is Apolipoprotein E (APOE).